The chain runs to 280 residues: Small ribosomal subunit protein uS3 (280 aa).

The KH type-2 domain maps to 38 to 106 (IRRLLSTGLE…QVQLNILEVR (69 aa)). Residues 215–280 (AAAAPAGAER…PAAEPQSTES (66 aa)) are disordered. Over residues 238–280 (SGASGTTATGTEAGRAAASADESTAAGQPAEAAPAAEPQSTES) the composition is skewed to low complexity.

Belongs to the universal ribosomal protein uS3 family. In terms of assembly, part of the 30S ribosomal subunit. Forms a tight complex with proteins S10 and S14.

Binds the lower part of the 30S subunit head. Binds mRNA in the 70S ribosome, positioning it for translation. In Mycolicibacterium paratuberculosis (strain ATCC BAA-968 / K-10) (Mycobacterium paratuberculosis), this protein is Small ribosomal subunit protein uS3.